The primary structure comprises 37 residues: Mu-agatoxin-Aa1f (37 aa).

4 cysteine pairs are disulfide-bonded: C2/C18, C9/C23, C17/C33, and C25/C31. Position 37 is an asparagine amide (N37).

It belongs to the neurotoxin 07 (Beta/delta-agtx) family. 03 (aga-4) subfamily. Aga sub-subfamily. As to expression, expressed by the venom gland.

The protein localises to the secreted. Insecticidal neurotoxin that induces an irreversible spastic paralysis when injected into insects. Modifies presynaptic voltage-gated sodium channels (Nav), causing them to open at the normal resting potential of the nerve. This leads to spontaneous release of neurotransmitter and repetitive action potentials in motor neurons. This chain is Mu-agatoxin-Aa1f, found in Agelenopsis aperta (North American funnel-web spider).